The following is a 317-amino-acid chain: 2-keto-3-deoxygluconate permease 1 (317 aa).

10 helical membrane passes run 10 to 30, 47 to 67, 82 to 102, 106 to 126, 134 to 154, 159 to 179, 195 to 215, 217 to 237, 248 to 268, and 279 to 299; these read VPGG…TFAP, AAPL…VKAA, LLVA…EGIF, GVAI…ALVG, VGAI…IALG, ANIP…GMIL, PLLI…EMLL, GGLA…FFNI, IAGA…LAIA, and AAAA…TPVL.

The protein belongs to the KdgT transporter family.

Its subcellular location is the cell inner membrane. The enzyme catalyses 2-dehydro-3-deoxy-D-gluconate(in) + H(+)(in) = 2-dehydro-3-deoxy-D-gluconate(out) + H(+)(out). Functionally, catalyzes the proton-dependent uptake of 2-keto-3-deoxygluconate (KDG) into the cell. This Salmonella typhi protein is 2-keto-3-deoxygluconate permease 1.